We begin with the raw amino-acid sequence, 371 residues long: 2-oxoadipate dioxygenase/decarboxylase, chloroplastic (371 aa).

The transit peptide at 1-50 (MISLHSSAIKASLYGSFPSSLRSTLSVSFSAGSLIRLPSVGKRNLSVVVS) directs the protein to the chloroplast. Residues His113 and Arg117 each contribute to the 2-oxoadipate site. Residue His113 coordinates Fe(2+). His250 serves as a coordination point for Fe(2+). 2-oxoadipate contacts are provided by Gln296 and Tyr320. Residue Glu322 coordinates Fe(2+).

It belongs to the 2-oxoadipate dioxygenase/decarboxylase family. Requires Fe(2+) as cofactor.

It is found in the plastid. The protein resides in the chloroplast. It carries out the reaction 2-oxoadipate + O2 = (R)-2-hydroxyglutarate + CO2. It participates in amino-acid degradation. Functionally, catalyzes the decarboxylation and hydroxylation of 2-oxoadipate (2OA) to form D-2-hydroxyglutarate (D-2-HGA). Is involved in a D-lysine catabolic pathway. The sequence is that of 2-oxoadipate dioxygenase/decarboxylase, chloroplastic from Arabidopsis thaliana (Mouse-ear cress).